Here is a 503-residue protein sequence, read N- to C-terminus: TGF-beta receptor type-1 (503 aa).

Positions 1–33 (MEAAVAAPRPRLLLLVLAAAAAAAAALLPGATA) are cleaved as a signal peptide. The Extracellular segment spans residues 34 to 126 (LQCFCHLCTK…SSPGLGPVEL (93 aa)). Cystine bridges form between Cys-36–Cys-54, Cys-38–Cys-41, Cys-48–Cys-71, Cys-86–Cys-100, and Cys-101–Cys-106. A glycan (N-linked (GlcNAc...) asparagine) is linked at Asn-45. Residues 127 to 147 (AAVIAGPVCFVCISLMLMVYI) traverse the membrane as a helical segment. Residues 148–503 (CHNRTVIHHR…QLSQQEGIKM (356 aa)) lie on the Cytoplasmic side of the membrane. The residue at position 165 (Ser-165) is a Phosphoserine. The GS domain maps to 175–204 (TTLKDLIYDMTTSGSGSGLPLLVQRTIART). 2 positions are modified to phosphothreonine; by TGFBR2: Thr-185 and Thr-186. Ser-187, Ser-189, and Ser-191 each carry phosphoserine; by TGFBR2. The short motif at 193–194 (LP) is the FKBP1A-binding element. Residues 205–495 (IVLQESIGKG…LRIKKTLSQL (291 aa)) form the Protein kinase domain. ATP contacts are provided by residues 211–219 (IGKGRFGEV) and Lys-232. A Glycyl lysine isopeptide (Lys-Gly) (interchain with G-Cter in ubiquitin) cross-link involves residue Lys-268. Asp-333 functions as the Proton acceptor in the catalytic mechanism. A Glycyl lysine isopeptide (Lys-Gly) (interchain with G-Cter in SUMO) cross-link involves residue Lys-391.

This sequence belongs to the protein kinase superfamily. TKL Ser/Thr protein kinase family. TGFB receptor subfamily. Homodimer; in the endoplasmic reticulum but also at the cell membrane. Heterohexamer; TGFB1, TGFB2 and TGFB3 homodimeric ligands assemble a functional receptor composed of two TGFBR1 and TGFBR2 heterodimers to form a ligand-receptor heterohexamer. The respective affinity of TGBRB1 and TGFBR2 for the ligands may modulate the kinetics of assembly of the receptor and may explain the different biological activities of TGFB1, TGFB2 and TGFB3. Component of a complex composed of TSC22D1 (via N-terminus), TGFBR1 and TGFBR2; the interaction between TSC22D1 and TGFBR1 is inhibited by SMAD7 and promoted by TGFB1. Interacts with CD109; inhibits TGF-beta receptor activation in keratinocytes. Interacts with RBPMS. Interacts (unphosphorylated) with FKBP1A; prevents TGFBR1 phosphorylation by TGFBR2 and stabilizes it in the inactive conformation. Interacts with SMAD2, SMAD3 and ZFYVE9; ZFYVE9 recruits SMAD2 and SMAD3 to the TGF-beta receptor. Interacts with TRAF6 and MAP3K7; induces MAP3K7 activation by TRAF6. Interacts with PARD6A; involved in TGF-beta induced epithelial to mesenchymal transition. Interacts with NEDD4L. Interacts with SMAD7, SMURF1 and SMURF2; SMAD7 recruits NEDD4L, SMURF1 and SMURF2 to the TGF-beta receptor. Interacts with USP15 and VPS39. Interacts with SDCBP (via C-terminus). Interacts with CAV1 and this interaction is impaired in the presence of SDCBP. Interacts with APPL1; interaction is TGF beta dependent; mediates trafficking of the TGFBR1 from the endosomes to the nucleus via microtubules in a TRAF6-dependent manner. Interacts with GPR50; this interaction promotes the constitutive activation of SMAD signaling pathway. Mg(2+) serves as cofactor. Mn(2+) is required as a cofactor. Post-translationally, phosphorylated at basal levels in the absence of ligand. Activated upon phosphorylation by TGFBR2, mainly in the GS domain. Phosphorylation in the GS domain abrogates FKBP1A-binding. N-Glycosylated. In terms of processing, ubiquitinated; undergoes ubiquitination catalyzed by several E3 ubiquitin ligases including SMURF1, SMURF2 and NEDD4L2. Results in the proteasomal and/or lysosomal degradation of the receptor thereby negatively regulating its activity. Deubiquitinated by USP15, leading to stabilization of the protein and enhanced TGF-beta signal. Its ubiquitination and proteasome-mediated degradation is negatively regulated by SDCBP. Ubiquitinated by BFAR via'Lys-63'-linked ubiquitination at Lys-268, leading to TGF-beta signaling activation. As to expression, found in all tissues examined, most abundant in placenta and least abundant in brain and heart. Expressed in a variety of cancer cell lines.

Its subcellular location is the cell membrane. The protein resides in the cell junction. It localises to the tight junction. The protein localises to the cell surface. It is found in the membrane raft. The catalysed reaction is L-threonyl-[receptor-protein] + ATP = O-phospho-L-threonyl-[receptor-protein] + ADP + H(+). It catalyses the reaction L-seryl-[receptor-protein] + ATP = O-phospho-L-seryl-[receptor-protein] + ADP + H(+). Kept in an inactive conformation by FKBP1A preventing receptor activation in absence of ligand. CD109 is another inhibitor of the receptor. In terms of biological role, transmembrane serine/threonine kinase forming with the TGF-beta type II serine/threonine kinase receptor, TGFBR2, the non-promiscuous receptor for the TGF-beta cytokines TGFB1, TGFB2 and TGFB3. Transduces the TGFB1, TGFB2 and TGFB3 signal from the cell surface to the cytoplasm and is thus regulating a plethora of physiological and pathological processes including cell cycle arrest in epithelial and hematopoietic cells, control of mesenchymal cell proliferation and differentiation, wound healing, extracellular matrix production, immunosuppression and carcinogenesis. The formation of the receptor complex composed of 2 TGFBR1 and 2 TGFBR2 molecules symmetrically bound to the cytokine dimer results in the phosphorylation and the activation of TGFBR1 by the constitutively active TGFBR2. Activated TGFBR1 phosphorylates SMAD2 which dissociates from the receptor and interacts with SMAD4. The SMAD2-SMAD4 complex is subsequently translocated to the nucleus where it modulates the transcription of the TGF-beta-regulated genes. This constitutes the canonical SMAD-dependent TGF-beta signaling cascade. Also involved in non-canonical, SMAD-independent TGF-beta signaling pathways. For instance, TGFBR1 induces TRAF6 autoubiquitination which in turn results in MAP3K7 ubiquitination and activation to trigger apoptosis. Also regulates epithelial to mesenchymal transition through a SMAD-independent signaling pathway through PARD6A phosphorylation and activation. This Homo sapiens (Human) protein is TGF-beta receptor type-1 (TGFBR1).